The sequence spans 482 residues: tRNA sulfurtransferase (482 aa).

The region spanning Leu61 to Arg165 is the THUMP domain. ATP-binding positions include Leu183–Ile184, Lys265, Gly287, and Gln296. A disulfide bond links Cys344 and Cys456. Residues Phe404–Pro482 enclose the Rhodanese domain. The active-site Cysteine persulfide intermediate is Cys456.

It belongs to the ThiI family.

It localises to the cytoplasm. The enzyme catalyses [ThiI sulfur-carrier protein]-S-sulfanyl-L-cysteine + a uridine in tRNA + 2 reduced [2Fe-2S]-[ferredoxin] + ATP + H(+) = [ThiI sulfur-carrier protein]-L-cysteine + a 4-thiouridine in tRNA + 2 oxidized [2Fe-2S]-[ferredoxin] + AMP + diphosphate. The catalysed reaction is [ThiS sulfur-carrier protein]-C-terminal Gly-Gly-AMP + S-sulfanyl-L-cysteinyl-[cysteine desulfurase] + AH2 = [ThiS sulfur-carrier protein]-C-terminal-Gly-aminoethanethioate + L-cysteinyl-[cysteine desulfurase] + A + AMP + 2 H(+). It functions in the pathway cofactor biosynthesis; thiamine diphosphate biosynthesis. Catalyzes the ATP-dependent transfer of a sulfur to tRNA to produce 4-thiouridine in position 8 of tRNAs, which functions as a near-UV photosensor. Also catalyzes the transfer of sulfur to the sulfur carrier protein ThiS, forming ThiS-thiocarboxylate. This is a step in the synthesis of thiazole, in the thiamine biosynthesis pathway. The sulfur is donated as persulfide by IscS. The chain is tRNA sulfurtransferase from Escherichia coli O127:H6 (strain E2348/69 / EPEC).